The primary structure comprises 728 residues: Myb-related protein A (728 aa).

The segment at 1–31 (MAGRARSEDEEEDGQFTEHDYDVSLQKGPKK) is disordered. 3 consecutive HTH myb-type domains span residues 30 to 80 (KKPW…HKVL), 81 to 136 (SPEL…NPDV), and 137 to 187 (KKSS…KRKV). 3 consecutive DNA-binding regions (H-T-H motif) follow at residues 57–80 (WGVV…HKVL), 109–132 (WSII…HNHL), and 160–183 (WAEI…NSTM). Positions 230–293 (IPRYSSLSHD…RKRVPSGSSL (64 aa)) are transcriptional activation domain. The negative regulatory domain stretch occupies residues 296–534 (SESYHMGESM…IRRSLMAVTP (239 aa)).

As to quaternary structure, component of the DREAM complex.

It localises to the nucleus. Transcription factor that specifically recognizes the sequence 5'-YAAC[GT]G-3'. Acts as a master regulator of male meiosis by promoting expression of piRNAs. The piRNA metabolic process mediates the repression of transposable elements during meiosis by forming complexes composed of piRNAs and Piwi proteins and governs the methylation and subsequent repression of transposons, which is essential for the germline integrity. This Xenopus laevis (African clawed frog) protein is Myb-related protein A (mybl1).